The primary structure comprises 226 residues: Phosphoglycolate phosphatase (226 aa).

Catalysis depends on Asp10, which acts as the Nucleophile. Positions 10, 12, and 175 each coordinate Mg(2+).

It belongs to the HAD-like hydrolase superfamily. CbbY/CbbZ/Gph/YieH family. Requires Mg(2+) as cofactor.

It carries out the reaction 2-phosphoglycolate + H2O = glycolate + phosphate. It functions in the pathway organic acid metabolism; glycolate biosynthesis; glycolate from 2-phosphoglycolate: step 1/1. Specifically catalyzes the dephosphorylation of 2-phosphoglycolate. Is involved in the dissimilation of the intracellular 2-phosphoglycolate formed during the DNA repair of 3'-phosphoglycolate ends, a major class of DNA lesions induced by oxidative stress. This Vibrio cholerae serotype O1 (strain ATCC 39315 / El Tor Inaba N16961) protein is Phosphoglycolate phosphatase.